The sequence spans 169 residues: Photosystem I assembly protein Ycf3 (169 aa).

TPR repeat units follow at residues 36–69 (AFTYYRDGMSAQSEGNYAEALQNYYEAMRLEIDP), 73–106 (SYILYNIGLIHTRNGEHTKALEYYFRALERNPFL), and 121–154 (GEQAIRQGDSEIAEAWFNQAAEYWKQAIALTPGN).

Belongs to the Ycf3 family.

The protein resides in the plastid. It localises to the chloroplast thylakoid membrane. Functionally, essential for the assembly of the photosystem I (PSI) complex. May act as a chaperone-like factor to guide the assembly of the PSI subunits. This is Photosystem I assembly protein Ycf3 from Cucumis sativus (Cucumber).